The following is a 473-amino-acid chain: 3-isopropylmalate dehydratase large subunit (473 aa).

[4Fe-4S] cluster-binding residues include Cys-351, Cys-414, and Cys-417.

The protein belongs to the aconitase/IPM isomerase family. LeuC type 1 subfamily. Heterodimer of LeuC and LeuD. [4Fe-4S] cluster is required as a cofactor.

It catalyses the reaction (2R,3S)-3-isopropylmalate = (2S)-2-isopropylmalate. It participates in amino-acid biosynthesis; L-leucine biosynthesis; L-leucine from 3-methyl-2-oxobutanoate: step 2/4. Catalyzes the isomerization between 2-isopropylmalate and 3-isopropylmalate, via the formation of 2-isopropylmaleate. The chain is 3-isopropylmalate dehydratase large subunit from Acidovorax sp. (strain JS42).